We begin with the raw amino-acid sequence, 108 residues long: Large ribosomal subunit protein uL24 (108 aa).

This sequence belongs to the universal ribosomal protein uL24 family. In terms of assembly, part of the 50S ribosomal subunit.

Its function is as follows. One of two assembly initiator proteins, it binds directly to the 5'-end of the 23S rRNA, where it nucleates assembly of the 50S subunit. In terms of biological role, one of the proteins that surrounds the polypeptide exit tunnel on the outside of the subunit. This is Large ribosomal subunit protein uL24 from Mycoplasma capricolum subsp. capricolum (strain California kid / ATCC 27343 / NCTC 10154).